Reading from the N-terminus, the 104-residue chain is MSYAIFKHGGKQYKVVEGDIVLLDKMDKEPKALVELVEVLAVSKEGKLSCGKPFVNGAKIEAEVINEGRGKKVITFKKRRRKDSKTKRGFRRDFTRVRITKIVA.

This sequence belongs to the bacterial ribosomal protein bL21 family. In terms of assembly, part of the 50S ribosomal subunit. Contacts protein L20.

In terms of biological role, this protein binds to 23S rRNA in the presence of protein L20. The chain is Large ribosomal subunit protein bL21 from Helicobacter pylori (strain Shi470).